Consider the following 471-residue polypeptide: Probable ribonuclease FAU-1 (471 aa).

Positions 93-139 (GAVFDAAVDHTVGGGAILDLGDDREAYLPFGAVDDHVTDGDTLRVAI) constitute an S1 motif domain.

Belongs to the FAU-1 family.

Probable RNase involved in rRNA stability through maturation and/or degradation of precursor rRNAs. Binds to RNA in loop regions with AU-rich sequences. The chain is Probable ribonuclease FAU-1 from Halobacterium salinarum (strain ATCC 29341 / DSM 671 / R1).